The primary structure comprises 133 residues: Type III secretion protein HrcQb (133 aa).

Residues 1–21 (MSTEDLYQDDVEMLDDYEEPV) are compositionally biased toward acidic residues. The disordered stretch occupies residues 1 to 60 (MSTEDLYQDDVEMLDDYEEPVPEQADQQQRDDEYAEHAFGYADSDAEHEEQSGDHHESPM). Basic and acidic residues predominate over residues 49–59 (EEQSGDHHESP).

Belongs to the FliN/MopA/SpaO family. Homotetramer. The four monomers assemble into two tightly bound homodimers. Interacts with HrcQa.

It localises to the cytoplasm. Component of the type III secretion system, which is required for effector protein delivery, parasitism, and pathogenicity. Probably participates in the formation of a C-ring-like assembly along with HrcQa. This chain is Type III secretion protein HrcQb (hrcQb), found in Pseudomonas syringae pv. syringae.